A 189-amino-acid polypeptide reads, in one-letter code: Crossover junction endodeoxyribonuclease RuvC (189 aa).

Residues Asp-7, Glu-68, and Asp-141 contribute to the active site. Positions 7, 68, and 141 each coordinate Mg(2+).

The protein belongs to the RuvC family. As to quaternary structure, homodimer which binds Holliday junction (HJ) DNA. The HJ becomes 2-fold symmetrical on binding to RuvC with unstacked arms; it has a different conformation from HJ DNA in complex with RuvA. In the full resolvosome a probable DNA-RuvA(4)-RuvB(12)-RuvC(2) complex forms which resolves the HJ. Mg(2+) is required as a cofactor.

It is found in the cytoplasm. The enzyme catalyses Endonucleolytic cleavage at a junction such as a reciprocal single-stranded crossover between two homologous DNA duplexes (Holliday junction).. The RuvA-RuvB-RuvC complex processes Holliday junction (HJ) DNA during genetic recombination and DNA repair. Endonuclease that resolves HJ intermediates. Cleaves cruciform DNA by making single-stranded nicks across the HJ at symmetrical positions within the homologous arms, yielding a 5'-phosphate and a 3'-hydroxyl group; requires a central core of homology in the junction. The consensus cleavage sequence is 5'-(A/T)TT(C/G)-3'. Cleavage occurs on the 3'-side of the TT dinucleotide at the point of strand exchange. HJ branch migration catalyzed by RuvA-RuvB allows RuvC to scan DNA until it finds its consensus sequence, where it cleaves and resolves the cruciform DNA. This is Crossover junction endodeoxyribonuclease RuvC from Chlorobium phaeovibrioides (strain DSM 265 / 1930) (Prosthecochloris vibrioformis (strain DSM 265)).